Consider the following 305-residue polypeptide: MTRKLEIPESRDLPDWSHIGGGKVRELYVHRQYKNILLMFASNRVSAFDFVLEPEIPEKGRMLTQMSNWWFRKLPAENHLLENYDQELYRDLASHIPSHILERSTICRKMDIIPFEFVIRGYLTGSAWADYLENNTVYGIKLKGKFRQGDRLPGPIFTPTTKSRTKDTPVRYEDLVNAIGLSHAQQLREMCTDYYTTAEQIARNKGLIIADAKFEFGIAEGKAYLADELLTADSARYWDINSWGQFDLPIERRLDSFDKQAVRDWVKCNSGKNITPQNITPLRLPQELIQTVYKKYKTLLAKLTG.

Belongs to the SAICAR synthetase family.

The catalysed reaction is 5-amino-1-(5-phospho-D-ribosyl)imidazole-4-carboxylate + L-aspartate + ATP = (2S)-2-[5-amino-1-(5-phospho-beta-D-ribosyl)imidazole-4-carboxamido]succinate + ADP + phosphate + 2 H(+). It participates in purine metabolism; IMP biosynthesis via de novo pathway; 5-amino-1-(5-phospho-D-ribosyl)imidazole-4-carboxamide from 5-amino-1-(5-phospho-D-ribosyl)imidazole-4-carboxylate: step 1/2. This Tropheryma whipplei (strain TW08/27) (Whipple's bacillus) protein is Phosphoribosylaminoimidazole-succinocarboxamide synthase.